We begin with the raw amino-acid sequence, 350 residues long: Ion-translocating oxidoreductase complex subunit D (350 aa).

The next 5 membrane-spanning stretches (helical) occupy residues 20 to 40, 42 to 62, 68 to 88, 89 to 109, and 123 to 143; these read IMMLVLIAALPGIATQLWFFG, GTLFQIILAAVSALAAEAAVL, PIAAILKDNSALLTGLLLAVS, IPPLAPWWMVVLGTVFAVIIA, and PAMIGYVVLLISFPVQMTSWL. Residue T187 is modified to FMN phosphoryl threonine. Transmembrane regions (helical) follow at residues 215 to 235, 244 to 264, 267 to 287, 301 to 321, and 322 to 342; these read LAGAGWQWVNIAWLIGGVWLL, IPVSFLVTLAVCSTLGWAFAG, LASPQLHLLSGATMLGAFFIL, LIFGALAGLLVWLIRSFGGYP, and DGVAFAVLLANITVPLIDYYT.

The protein belongs to the NqrB/RnfD family. In terms of assembly, the complex is composed of six subunits: RnfA, RnfB, RnfC, RnfD, RnfE and RnfG. It depends on FMN as a cofactor.

The protein localises to the cell inner membrane. In terms of biological role, part of a membrane-bound complex that couples electron transfer with translocation of ions across the membrane. This is Ion-translocating oxidoreductase complex subunit D from Citrobacter koseri (strain ATCC BAA-895 / CDC 4225-83 / SGSC4696).